A 757-amino-acid polypeptide reads, in one-letter code: Chloride anion exchanger (757 aa).

Over 1-71 (MIEAIGNQYV…SWLPAYKIKE (71 aa)) the chain is Cytoplasmic. The helical transmembrane segment at 72–92 (WLLSDIVSGISTGLVAVLQGL) threads the bilayer. Residue A93 is a topological domain, extracellular. A helical membrane pass occupies residues 94–114 (FALLVNIPPAYGLYAAFFPVI). Residues 115 to 124 (TYFFLGTSRH) lie on the Cytoplasmic side of the membrane. A helical transmembrane segment spans residues 125–145 (ISVGPFPVLSMMVGVVVTRVA). Residues 146–176 (SGSDTSPALSSSSAENDSMIEEKVMVAASVT) are Extracellular-facing. N161 is a glycosylation site (N-linked (GlcNAc...) asparagine). The helical transmembrane segment at 177–197 (VLSGIIQLLLGVLQIGFVVIY) threads the bilayer. The Cytoplasmic segment spans residues 198–201 (LSES). The helical transmembrane segment at 202 to 222 (LISGFTTAAAIHVLVSQLKFM) threads the bilayer. Topologically, residues 223–250 (LQLTVPAHSDPFSIFKVLESVFSQIQKT) are extracellular. Residues 251 to 271 (NIADLVTSVIILVVVFVVKEI) form a helical membrane-spanning segment. Over 272–278 (NQRYRSK) the chain is Cytoplasmic. The chain crosses the membrane as a helical span at residues 279-299 (LPVPIPIELIMTVIATGISYG). Over 300–335 (CNFEQRFGVAVVGNMSLGFQPPITPSVEVFQDTIGD) the chain is Extracellular. Residues 336 to 356 (CFGIAIVGFAVAFSVASVYSL) traverse the membrane as a helical segment. Topologically, residues 357 to 367 (KYDYPIDGNQE) are cytoplasmic. The chain crosses the membrane as a helical span at residues 368-388 (LIALGVSNIFTGAFKGFAGST). Over 389–404 (ALSRSGVQESTGGKTQ) the chain is Extracellular. A helical transmembrane segment spans residues 405–425 (VAGLLSAVIVLIVIVAIGFLL). Residues 426–462 (QPLQKSVLAALALGNLKGMLMQFAEIGRLWKKDKYDC) are Cytoplasmic-facing. A helical transmembrane segment spans residues 463–483 (LIWIMTFIFAIVLGLGLGLAA). Topologically, residues 484–757 (SVAFQLLTIV…ECQVPVETKF (274 aa)) are extracellular. One can recognise an STAS domain in the interval 518-713 (NYADVYEPEG…LTIHDAILHI (196 aa)). The PDZ-binding signature appears at 754–757 (ETKF).

It belongs to the SLC26A/SulP transporter (TC 2.A.53) family. In terms of assembly, interacts with PDZK1, CFTR, SLC26A6 and NHERF1. Interacts (via PDZ-binding motif) with NHERF4 (via the third PDZ domain); interaction leads to decreased expression of SLC26A3 on the cell membrane resulting in its reduced exchanger activity. N-glycosylation is required for efficient cell surface expression, and protection from proteolytic degradation.

The protein localises to the apical cell membrane. It is found in the membrane. It localises to the cell membrane. It carries out the reaction hydrogencarbonate(in) + 2 chloride(out) = hydrogencarbonate(out) + 2 chloride(in). Functionally, mediates chloride-bicarbonate exchange with a chloride bicarbonate stoichiometry of 2:1 in the intestinal epithelia. Plays a role in the chloride and bicarbonate homeostasis during sperm epididymal maturation and capacitation. The chain is Chloride anion exchanger (Slc26a3) from Rattus norvegicus (Rat).